The following is a 199-amino-acid chain: Fe/S biogenesis protein NfuA (199 aa).

[4Fe-4S] cluster-binding residues include C156 and C159.

Belongs to the NfuA family. As to quaternary structure, homodimer. The cofactor is [4Fe-4S] cluster.

Involved in iron-sulfur cluster biogenesis. Binds a 4Fe-4S cluster, can transfer this cluster to apoproteins, and thereby intervenes in the maturation of Fe/S proteins. Could also act as a scaffold/chaperone for damaged Fe/S proteins. In Haemophilus ducreyi (strain 35000HP / ATCC 700724), this protein is Fe/S biogenesis protein NfuA.